Reading from the N-terminus, the 306-residue chain is tRNA pseudouridine synthase B (306 aa).

The active-site Nucleophile is the aspartate 48.

Belongs to the pseudouridine synthase TruB family. Type 1 subfamily.

It catalyses the reaction uridine(55) in tRNA = pseudouridine(55) in tRNA. Functionally, responsible for synthesis of pseudouridine from uracil-55 in the psi GC loop of transfer RNAs. The protein is tRNA pseudouridine synthase B of Haemophilus influenzae (strain 86-028NP).